The sequence spans 337 residues: Anthranilate phosphoribosyltransferase (337 aa).

Residues Gly-81, 84–85, Thr-89, 91–94, 109–117, and Thr-121 contribute to the 5-phospho-alpha-D-ribose 1-diphosphate site; these read GD, NIST, and KHGNRALSS. Gly-81 provides a ligand contact to anthranilate. Mg(2+) is bound at residue Ser-93. Anthranilate is bound at residue Asn-112. Arg-167 contributes to the anthranilate binding site. 2 residues coordinate Mg(2+): Asp-225 and Glu-226.

It belongs to the anthranilate phosphoribosyltransferase family. In terms of assembly, homodimer. It depends on Mg(2+) as a cofactor.

It catalyses the reaction N-(5-phospho-beta-D-ribosyl)anthranilate + diphosphate = 5-phospho-alpha-D-ribose 1-diphosphate + anthranilate. It participates in amino-acid biosynthesis; L-tryptophan biosynthesis; L-tryptophan from chorismate: step 2/5. Its function is as follows. Catalyzes the transfer of the phosphoribosyl group of 5-phosphorylribose-1-pyrophosphate (PRPP) to anthranilate to yield N-(5'-phosphoribosyl)-anthranilate (PRA). The sequence is that of Anthranilate phosphoribosyltransferase from Rhizobium meliloti (strain 1021) (Ensifer meliloti).